The sequence spans 322 residues: RING finger protein 113B (322 aa).

Residues 24-92 (KPGRKGAAGL…EEAAPESLDV (69 aa)) form a disordered region. Over residues 46 to 60 (SSSSGDEGDTVAQPP) the composition is skewed to low complexity. Residues 190 to 218 (DYQPDICKDYKETGFCGFGDSCKFLHDRS) form a C3H1-type zinc finger. An RING-type zinc finger spans residues 256–294 (CFICRQAFQNPVVTKCRHYFCESCALEHFRATPRCYICD).

This is RING finger protein 113B (RNF113B) from Homo sapiens (Human).